The primary structure comprises 469 residues: 3-isopropylmalate dehydratase large subunit (469 aa).

The [4Fe-4S] cluster site is built by Cys347, Cys410, and Cys413.

This sequence belongs to the aconitase/IPM isomerase family. LeuC type 1 subfamily. As to quaternary structure, heterodimer of LeuC and LeuD. The cofactor is [4Fe-4S] cluster.

It carries out the reaction (2R,3S)-3-isopropylmalate = (2S)-2-isopropylmalate. Its pathway is amino-acid biosynthesis; L-leucine biosynthesis; L-leucine from 3-methyl-2-oxobutanoate: step 2/4. In terms of biological role, catalyzes the isomerization between 2-isopropylmalate and 3-isopropylmalate, via the formation of 2-isopropylmaleate. This is 3-isopropylmalate dehydratase large subunit from Burkholderia ambifaria (strain MC40-6).